Here is a 97-residue protein sequence, read N- to C-terminus: UPF0473 protein Exig_2070 (97 aa).

This sequence belongs to the UPF0473 family.

The protein is UPF0473 protein Exig_2070 of Exiguobacterium sibiricum (strain DSM 17290 / CCUG 55495 / CIP 109462 / JCM 13490 / 255-15).